The following is a 626-amino-acid chain: ABC transporter G family member 8 (626 aa).

Residues 56–300 (VNLDNKTENS…SLGYPCPNNT (245 aa)) enclose the ABC transporter domain. 90–97 (GPSGSGKS) lines the ATP pocket. The ABC transmembrane type-2 domain maps to 373–621 (GNALSRVITA…SLSYFALHFL (249 aa)). Transmembrane regions (helical) follow at residues 376-396 (LSRVITAIVIGALFGSCFAGL), 409-429 (TLFFLTTGLMLSPFSMITLFL), 447-467 (FPYFLSMITVELTIEFFVTLV), 485-505 (FFFAVLVYSFIHSLSTFFISS), 515-535 (LTFSYASSLSVVFMLFAGFYV), 543-563 (AFGWLHWVNPAFYGYSSVVIN), and 600-620 (FGVLVAWATFFYSLSYFALHF).

The protein belongs to the ABC transporter superfamily. ABCG family. Eye pigment precursor importer (TC 3.A.1.204) subfamily.

Its subcellular location is the membrane. The polypeptide is ABC transporter G family member 8 (abcG8) (Dictyostelium discoideum (Social amoeba)).